A 119-amino-acid chain; its full sequence is Large ribosomal subunit protein bL12 (119 aa).

The protein belongs to the bacterial ribosomal protein bL12 family. Homodimer. Part of the ribosomal stalk of the 50S ribosomal subunit. Forms a multimeric L10(L12)X complex, where L10 forms an elongated spine to which 2 to 4 L12 dimers bind in a sequential fashion. Binds GTP-bound translation factors.

Forms part of the ribosomal stalk which helps the ribosome interact with GTP-bound translation factors. Is thus essential for accurate translation. The polypeptide is Large ribosomal subunit protein bL12 (Lysinibacillus sphaericus (strain C3-41)).